Here is a 507-residue protein sequence, read N- to C-terminus: Carnosic acid synthase (507 aa).

A helical transmembrane segment spans residues 6-23; that stretch reads VFSLAFLAAWFIVVFPRW. Residue cysteine 450 participates in heme binding.

This sequence belongs to the cytochrome P450 family. Heme is required as a cofactor. Expressed in glandular trichomes of young leaves.

It localises to the membrane. The catalysed reaction is 11-hydroxyferruginol + 3 reduced [NADPH--hemoprotein reductase] + 3 O2 = carnosate + 3 oxidized [NADPH--hemoprotein reductase] + 4 H2O + 4 H(+). The enzyme catalyses miltiradiene + 2 reduced [NADPH--hemoprotein reductase] + 2 O2 = miltiradien-20-al + 2 oxidized [NADPH--hemoprotein reductase] + 3 H2O + 2 H(+). It carries out the reaction ferruginol + 3 reduced [NADPH--hemoprotein reductase] + 3 O2 = pisiferate + 3 oxidized [NADPH--hemoprotein reductase] + 4 H2O + 4 H(+). It participates in secondary metabolite biosynthesis; terpenoid biosynthesis. Its function is as follows. Monooxygenase involved in the biosynthesis of carnosate, a potent antioxidant labdane-related diterpene natural product. Catalyzes the oxidation of 11-hydroxyferruginol to produce carnosate. Mediates the conversion of miltiradien into miltiradien-20-al. Also involved in the production of pisiferic acid and derivative products from ferruginol. The polypeptide is Carnosic acid synthase (Rosmarinus officinalis (Rosemary)).